The sequence spans 277 residues: Large ribosomal subunit protein uL2 (277 aa).

2 stretches are compositionally biased toward basic residues: residues 210–219 (RARWAGKRPQ) and 259–277 (TRSKKARSNKFIVRSRNKK). The segment at 210 to 277 (RARWAGKRPQ…KFIVRSRNKK (68 aa)) is disordered.

The protein belongs to the universal ribosomal protein uL2 family. As to quaternary structure, part of the 50S ribosomal subunit. Forms a bridge to the 30S subunit in the 70S ribosome.

Functionally, one of the primary rRNA binding proteins. Required for association of the 30S and 50S subunits to form the 70S ribosome, for tRNA binding and peptide bond formation. It has been suggested to have peptidyltransferase activity; this is somewhat controversial. Makes several contacts with the 16S rRNA in the 70S ribosome. The sequence is that of Large ribosomal subunit protein uL2 from Ligilactobacillus salivarius (strain UCC118) (Lactobacillus salivarius).